A 166-amino-acid chain; its full sequence is Holin-like protein TcdE (166 aa).

A run of 4 helical transmembrane segments spans residues 15 to 35 (IFFY…LSEH), 36 to 56 (IFIK…CLSA), 77 to 97 (MIAC…NFLF), and 111 to 131 (HLGI…VSIL).

Belongs to the bacteriophage holin family. As to quaternary structure, homomultimer.

Its subcellular location is the cell membrane. In terms of biological role, holin-like protein required for secretion of toxins A and B (TcdA and TcdB). Facilitates the release of toxins to the extracellular environment without causing the bacterial cell lysis. Its function is as follows. Has weak activity, suggesting that it may act as a antiholin when multiple forms are produced. The protein is Holin-like protein TcdE of Clostridioides difficile (Peptoclostridium difficile).